Reading from the N-terminus, the 254-residue chain is Ribosomal RNA small subunit methyltransferase G (254 aa).

A disordered region spans residues 1–21; the sequence is MPEGDGVPRETPSPSVVPESP. Over residues 9–21 the composition is skewed to low complexity; the sequence is RETPSPSVVPESP. Residues Gly90, Leu95, 142 to 143, and Arg157 contribute to the S-adenosyl-L-methionine site; that span reads AE. Positions 230 to 254 are disordered; sequence GPLRAATAPAPPGAAKRRPGKGNRR. Residues 244-254 are compositionally biased toward basic residues; the sequence is AKRRPGKGNRR.

Belongs to the methyltransferase superfamily. RNA methyltransferase RsmG family.

It localises to the cytoplasm. In terms of biological role, specifically methylates the N7 position of guanine in position 518 of 16S rRNA. The chain is Ribosomal RNA small subunit methyltransferase G from Kineococcus radiotolerans (strain ATCC BAA-149 / DSM 14245 / SRS30216).